Here is a 97-residue protein sequence, read N- to C-terminus: Exodeoxyribonuclease 7 small subunit (97 aa).

A disordered region spans residues 64–97 (NGQLHPAEEKGDDVSNNGVQNQGYKSQFLDGDVF). Positions 77-88 (VSNNGVQNQGYK) are enriched in polar residues.

This sequence belongs to the XseB family. In terms of assembly, heterooligomer composed of large and small subunits.

The protein localises to the cytoplasm. It catalyses the reaction Exonucleolytic cleavage in either 5'- to 3'- or 3'- to 5'-direction to yield nucleoside 5'-phosphates.. Its function is as follows. Bidirectionally degrades single-stranded DNA into large acid-insoluble oligonucleotides, which are then degraded further into small acid-soluble oligonucleotides. This chain is Exodeoxyribonuclease 7 small subunit, found in Limosilactobacillus fermentum (strain NBRC 3956 / LMG 18251) (Lactobacillus fermentum).